Consider the following 87-residue polypeptide: Small ribosomal subunit protein bS21m (87 aa).

Belongs to the bacterial ribosomal protein bS21 family. In terms of assembly, component of the mitochondrial ribosome small subunit (28S) which comprises a 12S rRNA and about 30 distinct proteins.

Its subcellular location is the mitochondrion. In Mus musculus (Mouse), this protein is Small ribosomal subunit protein bS21m (Mrps21).